A 205-amino-acid chain; its full sequence is Small ribosomal subunit protein uS4 (205 aa).

Residues 18–46 (NIWGRPKSPVNRREYGPGQHGQRRKGKLS) form a disordered region. An S4 RNA-binding domain is found at 94–154 (RRLDAVVYRA…EASKQLAHVL (61 aa)).

The protein belongs to the universal ribosomal protein uS4 family. Part of the 30S ribosomal subunit. Contacts protein S5. The interaction surface between S4 and S5 is involved in control of translational fidelity.

In terms of biological role, one of the primary rRNA binding proteins, it binds directly to 16S rRNA where it nucleates assembly of the body of the 30S subunit. With S5 and S12 plays an important role in translational accuracy. In Bradyrhizobium diazoefficiens (strain JCM 10833 / BCRC 13528 / IAM 13628 / NBRC 14792 / USDA 110), this protein is Small ribosomal subunit protein uS4.